A 483-amino-acid polypeptide reads, in one-letter code: Argininosuccinate lyase (483 aa).

The protein belongs to the lyase 1 family. Argininosuccinate lyase subfamily.

Its subcellular location is the cytoplasm. It carries out the reaction 2-(N(omega)-L-arginino)succinate = fumarate + L-arginine. The protein operates within amino-acid biosynthesis; L-arginine biosynthesis; L-arginine from L-ornithine and carbamoyl phosphate: step 3/3. The protein is Argininosuccinate lyase of Albidiferax ferrireducens (strain ATCC BAA-621 / DSM 15236 / T118) (Rhodoferax ferrireducens).